The following is a 352-amino-acid chain: Cyclin-O (352 aa).

The tract at residues 1–40 (MVTPCPASPGSPAAGAGRRDSHQNLRAPVKKSRRPCLRRK) is disordered. The segment covering 28 to 40 (PVKKSRRPCLRRK) has biased composition (basic residues). Phosphoserine is present on S83.

Belongs to the cyclin family. In terms of tissue distribution, present in respiratory cells (at protein level). Expressed in multiciliated tissue in brain and fallopian tube (at protein level). Highly expressed in oocytes.

Its subcellular location is the cytoplasm. It localises to the nucleus. It is found in the nucleolus. Its function is as follows. Specifically required for generation of multiciliated cells, possibly by promoting a cell cycle state compatible with centriole amplification and maturation. Acts downstream of MCIDAS to promote mother centriole amplification and maturation in preparation for apical docking. May be involved in apoptosis in lymphoid cells; however, this result requires additional evidences in vivo. May be involved in oocyte meiotic resumption in oocytes. This chain is Cyclin-O, found in Mus musculus (Mouse).